We begin with the raw amino-acid sequence, 246 residues long: U2 small nuclear ribonucleoprotein A' (246 aa).

4 LRR repeats span residues 19–40 (RDRE…GVTR), 42–63 (QNDA…PLLQ), 64–85 (QLKT…IGHS), and 88–109 (ALHS…VHLS). The 39-residue stretch at 122–160 (TPASREAQYREFVIWKLPQVRVLDYQRIKDKERARAKDL) folds into the LRRCT domain.

It belongs to the U2 small nuclear ribonucleoprotein A family. Associated with the spliceosome.

Its subcellular location is the nucleus. Involved in pre-mRNA splicing. In Mycosarcoma maydis (Corn smut fungus), this protein is U2 small nuclear ribonucleoprotein A' (LEA1).